The following is a 257-amino-acid chain: Deoxyribose-phosphate aldolase (257 aa).

Catalysis depends on D102, which acts as the Proton donor/acceptor. Catalysis depends on K165, which acts as the Schiff-base intermediate with acetaldehyde. K199 functions as the Proton donor/acceptor in the catalytic mechanism.

This sequence belongs to the DeoC/FbaB aldolase family. DeoC type 2 subfamily.

The protein localises to the cytoplasm. It carries out the reaction 2-deoxy-D-ribose 5-phosphate = D-glyceraldehyde 3-phosphate + acetaldehyde. It functions in the pathway carbohydrate degradation; 2-deoxy-D-ribose 1-phosphate degradation; D-glyceraldehyde 3-phosphate and acetaldehyde from 2-deoxy-alpha-D-ribose 1-phosphate: step 2/2. Its function is as follows. Catalyzes a reversible aldol reaction between acetaldehyde and D-glyceraldehyde 3-phosphate to generate 2-deoxy-D-ribose 5-phosphate. The chain is Deoxyribose-phosphate aldolase from Photobacterium profundum (strain SS9).